The chain runs to 515 residues: Maturase K (515 aa).

Belongs to the intron maturase 2 family. MatK subfamily.

The protein localises to the plastid. The protein resides in the chloroplast. Functionally, usually encoded in the trnK tRNA gene intron. Probably assists in splicing its own and other chloroplast group II introns. The polypeptide is Maturase K (Pinus yunnanensis (Yunnan pine)).